A 289-amino-acid chain; its full sequence is Rhodopsin (289 aa).

At 1–7 (YLVSPAG) the chain is on the extracellular side. Residues 8 to 32 (YAALGAYMFLLILVGFPVNFLTLYV) traverse the membrane as a helical segment. The Cytoplasmic portion of the chain corresponds to 33-44 (TLEHKKLRTPLN). A helical transmembrane segment spans residues 45–67 (YILLNLAVADLFMVLGGFTTTMY). The Extracellular portion of the chain corresponds to 68 to 81 (TSMHGYFVLGRLGC). The cysteines at positions 81 and 158 are disulfide-linked. A helical transmembrane segment spans residues 82 to 104 (NLEGFFVTLGGEIALWSLVVLAI). The short motif at 105 to 107 (ERW) is the 'Ionic lock' involved in activated form stabilization element. Over 105-123 (ERWIGVFKSIRNFRFTEDH) the chain is Cytoplasmic. The helical transmembrane segment at 124–144 (AIMGLGFSWVMAATCAVPPLV) threads the bilayer. Over 145 to 173 (GWLRYIPEGMQCSCGVDYYTRAEGFNNES) the chain is Extracellular. The N-linked (GlcNAc...) asparagine glycan is linked to Asn171. A helical membrane pass occupies residues 174–195 (FVIYMFIVHFLIPLIVIFFCYG). Topologically, residues 196–223 (RLLCAVKEAAAAQQESETTQRAEKEVSR) are cytoplasmic. Residues 224-245 (MVVIMVIGYLVCWLPYASVAWW) traverse the membrane as a helical segment. The Extracellular portion of the chain corresponds to 246–257 (IFCNQGSEFGPI). The helical transmembrane segment at 258 to 279 (FMTLPAFFAKSPAIYNPLIYIC) threads the bilayer. At Lys267 the chain carries N6-(retinylidene)lysine. At 280-289 (MNKQFPHCMI) the chain is on the cytoplasmic side.

The protein belongs to the G-protein coupled receptor 1 family. Opsin subfamily. In terms of processing, phosphorylated on some or all of the serine and threonine residues present in the C-terminal region. Contains one covalently linked retinal chromophore.

The protein resides in the membrane. It is found in the cell projection. It localises to the cilium. The protein localises to the photoreceptor outer segment. Photoreceptor required for image-forming vision at low light intensity. While most salt water fish species use retinal as chromophore, most freshwater fish use 3-dehydroretinal, or a mixture of retinal and 3-dehydroretinal. Light-induced isomerization of 11-cis to all-trans retinal triggers a conformational change that activates signaling via G-proteins. Subsequent receptor phosphorylation mediates displacement of the bound G-protein alpha subunit by arrestin and terminates signaling. The sequence is that of Rhodopsin (rho) from Leocottus kesslerii (Kessler's sculpin).